The sequence spans 197 residues: ADP-ribosylation factor-like protein 16 (197 aa).

GTP-binding positions include 30 to 37, 82 to 86, and 139 to 142; these read GATGVGKT, ELGGC, and NKID.

Belongs to the small GTPase superfamily. Arf family. In terms of assembly, interacts with RIGI; this interaction is GTP-dependent and induced upon viral infection; this interaction suppresses the RNA sensing activity of RIGI.

Its subcellular location is the cytoplasm. In terms of biological role, may suppress the RNA sensing activity of RIGI in a GTP-dependent. This Homo sapiens (Human) protein is ADP-ribosylation factor-like protein 16.